A 368-amino-acid polypeptide reads, in one-letter code: Glucose 1-dehydrogenase 2 (368 aa).

Cysteine 41 provides a ligand contact to Zn(2+). A substrate-binding site is contributed by threonine 43. Zn(2+)-binding residues include histidine 68 and glutamate 69. Asparagine 91 provides a ligand contact to substrate. 5 residues coordinate Zn(2+): cysteine 95, cysteine 98, cysteine 101, cysteine 109, and glutamine 152. 2 residues coordinate substrate: glutamine 152 and aspartate 156. Residues 213–215 (NRR), 279–281 (FGF), 307–309 (LDN), and lysine 356 contribute to the NADP(+) site. Residue asparagine 309 participates in substrate binding.

It belongs to the zinc-containing alcohol dehydrogenase family. Glucose 1-dehydrogenase subfamily. Zn(2+) serves as cofactor.

It catalyses the reaction D-glucose + NAD(+) = D-glucono-1,5-lactone + NADH + H(+). It carries out the reaction D-glucose + NADP(+) = D-glucono-1,5-lactone + NADPH + H(+). Catalyzes the NAD(P)(+)-dependent oxidation of D-glucose to D-gluconate via gluconolactone. Can utilize both NAD(+) and NADP(+) as electron acceptor. Is involved in the degradation of glucose through a non-phosphorylative variant of the Entner-Doudoroff pathway. This Saccharolobus solfataricus (strain ATCC 35092 / DSM 1617 / JCM 11322 / P2) (Sulfolobus solfataricus) protein is Glucose 1-dehydrogenase 2.